The chain runs to 176 residues: Small ribosomal subunit protein uS4 (176 aa).

Residues R104 to P166 form the S4 RNA-binding domain.

Belongs to the universal ribosomal protein uS4 family. As to quaternary structure, part of the 30S ribosomal subunit. Contacts protein S5. The interaction surface between S4 and S5 is involved in control of translational fidelity.

Functionally, one of the primary rRNA binding proteins, it binds directly to 16S rRNA where it nucleates assembly of the body of the 30S subunit. Its function is as follows. With S5 and S12 plays an important role in translational accuracy. The sequence is that of Small ribosomal subunit protein uS4 (rps4) from Sulfolobus acidocaldarius (strain ATCC 33909 / DSM 639 / JCM 8929 / NBRC 15157 / NCIMB 11770).